Reading from the N-terminus, the 467-residue chain is MTATSNSAPLAGGSLSSSATAQPPQPPPGHQQQHPLPQIYDSQMQYYYGSSMPNQPIPTYTAQNGAPQQFGTPPYYQDANGQFGQVPAQQQMMTAGHPYFYMAQPQQGGQHVAQSGQPQIFYYQQPLGQMAQQAAPMYFHPMQAASTPMLSEQMSMMPQIQSTNPQQSEQLRKSGAQISTTRTVPLTSSTPLPTSREYETVQRDRNRNSQSRYQCPIEHDDLPIDEISKITIDNHNDDTMSAEKENRFNKNRVEKLGRRGFAKPEVDSQLPHNFKTRLCMTHAAGINPCALGARCKFAHGLKELRASDIPTRYPNNKYKTKLCKNFARGGSGVCPYGLRCEFVHPSDTEFQNIPPYQRKMVEEHDSIPEDYVVARYQPRFMHTSGKATTPTKVTLKQRNVAGSMMCLSNTGRDLEAGGDFNHPEINENDLPPHLRRIRRGNPPVTRSRPSFSTKWTSVENLGLRGHY.

Low complexity-rich tracts occupy residues 1 to 22 and 179 to 195; these read MTATSNSAPLAGGSLSSSATAQ and STTRTVPLTSSTPLPTS. 2 disordered regions span residues 1-35 and 163-209; these read MTATSNSAPLAGGSLSSSATAQPPQPPPGHQQQHP and TNPQ…NRNS. Thr-190 bears the Phosphothreonine mark. The span at 196 to 207 shows a compositional bias: basic and acidic residues; sequence REYETVQRDRNR. C3H1-type zinc fingers lie at residues 273-302 and 317-347; these read NFKTRLCMTHAAGINPCALGARCKFAHGLK and KYKTKLCKNFARGGSGVCPYGLRCEFVHPSD. The interval 425-451 is disordered; that stretch reads INENDLPPHLRRIRRGNPPVTRSRPSF. Ser-457 bears the Phosphoserine mark.

As to quaternary structure, interacts (probably when phosphorylated on Thr-190) with plk-1 (via POLO box domain) and plk-2 (via POLO box domain). In terms of processing, phosphorylation on Ser-457 by par-1 promotes localization of the protein to the anterior cytoplasm of the zygote.

It localises to the cytoplasm. Functionally, functions with mex-5 to affect embryonic viability, establish soma germline asymmetry in embryos and establish plk-1, pie-1, mex-1, and pos-1 asymmetry in embryos. Also affects formation of intestinal cells. The protein is Zinc finger protein mex-6 (mex-6) of Caenorhabditis elegans.